Consider the following 791-residue polypeptide: DUF1769 family protein duc1 (791 aa).

The tract at residues 158-189 (ADSQESDTESLPEINDSSDVSLSDLPSTNVTP) is disordered. Positions 174-184 (SSDVSLSDLPS) are enriched in low complexity. The FFAT signature appears at 373 to 379 (RYFTALE). Residue Tyr374 is modified to Phosphotyrosine. Thr376 is subject to Phosphothreonine. Disordered regions lie at residues 381–505 (QQDQ…SNRR), 542–606 (NVAG…VDGK), and 630–658 (PKPVRTATSQSKIPKPVKHIPSDSNNLDP). The segment covering 415-426 (LIKRMSLRSKKS) has biased composition (basic residues). Over residues 444–453 (STASAASTSA) the composition is skewed to low complexity. Positions 455–473 (KTEKEKKMSAPRRSLDKLI) are enriched in basic and acidic residues. A phosphoserine mark is found at Ser477 and Ser493. Residues 477-487 (SLHRHHHHHHK) are compositionally biased toward basic residues. Residues 555 to 564 (EQTSITSGVP) show a composition bias toward polar residues. Ser574 is subject to Phosphoserine. A compositionally biased stretch (basic and acidic residues) spans 574 to 586 (STPEKIVEERSID). A compositionally biased stretch (polar residues) spans 587 to 601 (EVSQSNTPSSKQLPQ).

The protein belongs to the UPF0590 family. As to quaternary structure, interacts (via FFAT-motif) with scs2 (via MSP domain); the interaction is direct and serves to restrict the localization of duc1 to areas of cell membrane-endoplasmic reticulum contact sites, and away from the cell division site.

The protein localises to the cell membrane. In terms of biological role, promotes the proper distribution of phosphatidylinositol 4,5-bisphosphate (PtdIns(4,5)P2/PIP2) synthesis at the cell membrane. May bind phosphatidylinositol 4,5-bisphosphate (PtdIns(4,5)P2/PIP2) and is required for robust anchoring of the contractile ring to the cell membrane. The chain is DUF1769 family protein duc1 from Schizosaccharomyces pombe (strain 972 / ATCC 24843) (Fission yeast).